The sequence spans 37 residues: Cytochrome b6-f complex subunit 5 (37 aa).

A helical transmembrane segment spans residues 5-25 (ILLGIVLGMVVVTLAGLFVAA).

The protein belongs to the PetG family. The 4 large subunits of the cytochrome b6-f complex are cytochrome b6, subunit IV (17 kDa polypeptide, PetD), cytochrome f and the Rieske protein, while the 4 small subunits are PetG, PetL, PetM and PetN. The complex functions as a dimer.

The protein resides in the cellular thylakoid membrane. Component of the cytochrome b6-f complex, which mediates electron transfer between photosystem II (PSII) and photosystem I (PSI), cyclic electron flow around PSI, and state transitions. PetG is required for either the stability or assembly of the cytochrome b6-f complex. In Synechococcus sp. (strain JA-2-3B'a(2-13)) (Cyanobacteria bacterium Yellowstone B-Prime), this protein is Cytochrome b6-f complex subunit 5.